The chain runs to 60 residues: UPF0337 protein SSP1134 (60 aa).

The disordered stretch occupies residues 1-41; sequence MADENKFEQAKGNVKETVGNVTDNKELENEGKEDKTSGKAK. Residues 23–41 show a composition bias toward basic and acidic residues; sequence DNKELENEGKEDKTSGKAK.

The protein belongs to the UPF0337 (CsbD) family.

The polypeptide is UPF0337 protein SSP1134 (Staphylococcus saprophyticus subsp. saprophyticus (strain ATCC 15305 / DSM 20229 / NCIMB 8711 / NCTC 7292 / S-41)).